The following is a 426-amino-acid chain: Interferon regulatory factor 8 (426 aa).

A DNA-binding region (IRF tryptophan pentad repeat) is located at residues 7–114; the sequence is GRRLRQWLIE…EPYKVYRIVP (108 aa).

It belongs to the IRF family. In terms of assembly, interacts (via C-terminus) with TRIM21 (via C-terminus). Interacts with the BATF-JUNB heterodimer. Interacts with BATF (via bZIP domain); the interaction is direct. Interacts with COPS2. Interacts with SPI1. Ubiquitinated. Ubiquitination by TRIM21 in macrophages, a process that is strongly increased upon interferon gamma stimulation, leds to the enhanced transcriptional activity of target cytokine genes. Ubiquitination leads to its degradation by the proteasome. Post-translationally, sumoylated with SUMO3. Desumoylated by SENP1. As to expression, predominantly expressed in lymphoid tissues.

The protein resides in the nucleus. The protein localises to the cytoplasm. Its function is as follows. Transcription factor that specifically binds to the upstream regulatory region of type I interferon (IFN) and IFN-inducible MHC class I genes (the interferon consensus sequence (ICS)). Can both act as a transcriptional activator or repressor. Plays a negative regulatory role in cells of the immune system. Involved in CD8(+) dendritic cell differentiation by forming a complex with the BATF-JUNB heterodimer in immune cells, leading to recognition of AICE sequence (5'-TGAnTCA/GAAA-3'), an immune-specific regulatory element, followed by cooperative binding of BATF and IRF8 and activation of genes. Required for the development of plasmacytoid dendritic cells (pDCs), which produce most of the type I IFN in response to viral infection. Positively regulates macroautophagy in dendritic cells. Acts as a transcriptional repressor of osteoclast differentiation factors such as NFATC1 and EEIG1. In Homo sapiens (Human), this protein is Interferon regulatory factor 8.